The following is a 740-amino-acid chain: NAD(P)H-quinone oxidoreductase subunit 5, chloroplastic (740 aa).

Helical transmembrane passes span 9–29 (WIIPFIPLPVPMLIGAGLILF), 40–60 (WAFQSVLLLSIVMIFSIYLSI), 89–109 (IDPLTSIMSILITTVGIMVLI), 125–145 (FAYMSFFSTSMLGLVTSSNLI), 147–167 (IYIFWELVGLCSYLLIGFWFT), 185–205 (GDFGLLLGILGFYWITGSFEF), 219–239 (NEVNFLFVTLCAVLLFAGAVS), 258–278 (TPISALIHAATMVAAGIFLVA), 286–306 (VIPYIMYLISVIGIITVLLGA), 327–347 (LGYMMLALGMGSYRSALFHLI), 354–374 (ALLFLGSGSIIHSMETIVGYS), 396–416 (ITFLLGTLSLCGIPPLACFWS), 425–445 (WLYSPIFAIIAWATAGLTAFY), 543–563 (LFPIFVLGLFTLFVGAIGIPF), 602–622 (VVSVSIAYFGIFIASFLYKPV), and 717–737 (SYLFLYLAYVSVFLLVYYLLF).

This sequence belongs to the complex I subunit 5 family. NDH is composed of at least 16 different subunits, 5 of which are encoded in the nucleus.

The protein resides in the plastid. It localises to the chloroplast thylakoid membrane. The enzyme catalyses a plastoquinone + NADH + (n+1) H(+)(in) = a plastoquinol + NAD(+) + n H(+)(out). It carries out the reaction a plastoquinone + NADPH + (n+1) H(+)(in) = a plastoquinol + NADP(+) + n H(+)(out). In terms of biological role, NDH shuttles electrons from NAD(P)H:plastoquinone, via FMN and iron-sulfur (Fe-S) centers, to quinones in the photosynthetic chain and possibly in a chloroplast respiratory chain. The immediate electron acceptor for the enzyme in this species is believed to be plastoquinone. Couples the redox reaction to proton translocation, and thus conserves the redox energy in a proton gradient. This Solanum bulbocastanum (Wild potato) protein is NAD(P)H-quinone oxidoreductase subunit 5, chloroplastic (ndhF).